A 499-amino-acid chain; its full sequence is Glutathione reductase, cytosolic (499 aa).

Residues Ser35, Gly36, Glu55, Thr72, Cys73, and Lys81 each coordinate FAD. Residue Ser35 coordinates glutathione. Cys73 and Cys78 are oxidised to a cystine. Tyr130 provides a ligand contact to glutathione. Gly146 is an FAD binding site. Residues Gly211, Ile214, Glu217, Arg234, Arg240, and Gly297 each contribute to the NADP(+) site. Asp338 and Thr346 together coordinate FAD. Ala376 contacts NADP(+). His472 contacts FAD. The active-site Proton acceptor is the His472.

It belongs to the class-I pyridine nucleotide-disulfide oxidoreductase family. As to quaternary structure, homodimer. Requires FAD as cofactor.

Its subcellular location is the cytoplasm. It carries out the reaction 2 glutathione + NADP(+) = glutathione disulfide + NADPH + H(+). Functionally, catalyzes the reduction of glutathione disulfide (GSSG) to reduced glutathione (GSH). Constitutes the major mechanism to maintain a high GSH:GSSG ratio in the cytosol. The chain is Glutathione reductase, cytosolic from Arabidopsis thaliana (Mouse-ear cress).